Here is a 339-residue protein sequence, read N- to C-terminus: tRNA N6-adenosine threonylcarbamoyltransferase (339 aa).

The Fe cation site is built by histidine 111 and histidine 115. Substrate is bound by residues 139–143 (LVSGG), aspartate 172, glycine 185, aspartate 189, and asparagine 280. A Fe cation-binding site is contributed by aspartate 308.

It belongs to the KAE1 / TsaD family. Fe(2+) is required as a cofactor.

Its subcellular location is the cytoplasm. It catalyses the reaction L-threonylcarbamoyladenylate + adenosine(37) in tRNA = N(6)-L-threonylcarbamoyladenosine(37) in tRNA + AMP + H(+). Its function is as follows. Required for the formation of a threonylcarbamoyl group on adenosine at position 37 (t(6)A37) in tRNAs that read codons beginning with adenine. Is involved in the transfer of the threonylcarbamoyl moiety of threonylcarbamoyl-AMP (TC-AMP) to the N6 group of A37, together with TsaE and TsaB. TsaD likely plays a direct catalytic role in this reaction. This Phocaeicola vulgatus (strain ATCC 8482 / DSM 1447 / JCM 5826 / CCUG 4940 / NBRC 14291 / NCTC 11154) (Bacteroides vulgatus) protein is tRNA N6-adenosine threonylcarbamoyltransferase.